The chain runs to 1671 residues: Hybrid signal transduction protein dokA (1671 aa).

Residues 1–10 (MSSPHIELHS) show a composition bias toward basic and acidic residues. Disordered regions lie at residues 1 to 27 (MSSP…ELTG), 42 to 89 (DDLN…DKND), 126 to 241 (QQQQ…RRSS), 365 to 451 (YSNN…NNEE), 579 to 603 (HNHN…SPFI), and 629 to 651 (SNSS…SSNA). Polar residues predominate over residues 11–27 (QRTLSPQPSSNNFELTG). 2 stretches are compositionally biased toward low complexity: residues 45–83 (NNNN…NNNN) and 126–167 (QQQQ…QQQE). Residues 168–179 (QEQEQEQEQEQE) are compositionally biased toward acidic residues. Positions 367 to 449 (NNNNNTNTNN…NNNNNNNNNN (83 aa)) are enriched in low complexity. Residues 591–600 (TTQRASSTDS) are compositionally biased toward polar residues. Residues 1050 to 1276 (NISHELRTPC…TFWFAIKVSI (227 aa)) form the Histidine kinase domain. Positions 1519–1633 (YILVAEDNDI…RLQKTLSDWI (115 aa)) constitute a Response regulatory domain.

In terms of processing, under osmotic stress conditions, this protein undergoes phosphorylation at a serine residue in the kinase core, which is not due to an autophosphorylation of dokA. This is in contrast to the classic two-component paradigm, which predicts only histidine and aspartate phosphorylation.

In terms of biological role, part of the osmoregulatory pathway which leads to the increase of intracellular cAMP concentration in response to hyperosmotic stress. Thought to negatively regulate the rdeA-regA pathway by acting as a phosphatase towards the HPt protein rdeA. Has probably no histidine kinase activity. This Dictyostelium discoideum (Social amoeba) protein is Hybrid signal transduction protein dokA (dokA).